The chain runs to 462 residues: U2 small nuclear ribonucleoprotein auxiliary factor 35 kDa subunit-related protein 2 (462 aa).

The span at 1 to 13 (METAGATADATAG) shows a compositional bias: low complexity. Disordered stretches follow at residues 1 to 22 (META…RKKY), 44 to 66 (AELA…EEER), and 115 to 138 (WEEQ…EREE). Residue Lys49 forms a Glycyl lysine isopeptide (Lys-Gly) (interchain with G-Cter in SUMO2) linkage. Basic and acidic residues predominate over residues 57–66 (AEEKRLEEER). The segment at 170-198 (EKDRANCPFYSKTGACRFGDRCSRKHNFP) adopts a C3H1-type 1 zinc-finger fold. In terms of domain architecture, RRM spans 202-308 (PTLLIKGMFT…RQLQCEFCPV (107 aa)). Residues 310–337 (RWKMAICGLFEVQQCPRGKHCNFLHVFR) form a C3H1-type 2 zinc finger. Ser353 carries the phosphoserine modification. A disordered region spans residues 354–462 (PDWTSSSFGK…QPQPQPQSDP (109 aa)). The segment covering 364 to 379 (NSERRERASHYDEYYG) has biased composition (basic and acidic residues). Residue Ser389 is modified to Phosphoserine. A compositionally biased stretch (basic and acidic residues) spans 392-403 (FYKRNGESDRKS). Over residues 404–417 (SSRHRVKKSHRYGM) the composition is skewed to basic residues.

In terms of assembly, component of the U11/U12 snRNPs that are part of the U12-type spliceosome. Interacts (via RS domain) with SRSF1 and SRSF2. Interacts with U2AF2/U2AF65. Post-translationally, phosphorylated in the RS domain by SRPK1.

The protein resides in the nucleus. In terms of biological role, pre-mRNA-binding protein required for splicing of both U2- and U12-type introns. Selectively interacts with the 3'-splice site of U2- and U12-type pre-mRNAs and promotes different steps in U2 and U12 intron splicing. Recruited to U12 pre-mRNAs in an ATP-dependent manner and is required for assembly of the prespliceosome, a precursor to other spliceosomal complexes. For U2-type introns, it is selectively and specifically required for the second step of splicing. This is U2 small nuclear ribonucleoprotein auxiliary factor 35 kDa subunit-related protein 2 (Zrsr2) from Mus musculus (Mouse).